Here is a 252-residue protein sequence, read N- to C-terminus: MLEIKSIPAFNDNYIWLIQNSDKRCAVVDPGDAKPVLEYLQANELTLEAILITHHHNDHIGGVSDLVRAFPHVSVVGPKAEPIPTLTNAMEEGDKLELFGEIFMVLGLPGHTLGHIGYVGDGKLFCGDVLFSAGCGRIFEGTPEQMFESLSKIMKLPEETEVFCAHEYTASNVAFALAVEPDNEHLRQYRDDVNRLRGLNIPTIPTTLRKEKLINPFLRATNAEVIQSVTNRIENSDPCSVFTALREWKNEF.

7 residues coordinate Zn(2+): histidine 54, histidine 56, aspartate 58, histidine 59, histidine 111, aspartate 128, and histidine 166.

It belongs to the metallo-beta-lactamase superfamily. Glyoxalase II family. In terms of assembly, monomer. Zn(2+) serves as cofactor.

It carries out the reaction an S-(2-hydroxyacyl)glutathione + H2O = a 2-hydroxy carboxylate + glutathione + H(+). Its pathway is secondary metabolite metabolism; methylglyoxal degradation; (R)-lactate from methylglyoxal: step 2/2. In terms of biological role, thiolesterase that catalyzes the hydrolysis of S-D-lactoyl-glutathione to form glutathione and D-lactic acid. This Vibrio campbellii (strain ATCC BAA-1116) protein is Hydroxyacylglutathione hydrolase.